A 676-amino-acid chain; its full sequence is RNA helicase NPH-II (676 aa).

Residues 172–347 (FSAWISHRPV…VFLPNPAFIH (176 aa)) enclose the Helicase ATP-binding domain. 185-192 (GGTGVGKT) serves as a coordination point for ATP. Positions 296–299 (DEVH) match the DEXH box motif. One can recognise a Helicase C-terminal domain in the interval 366 to 535 (NPSSRMAYIE…NYILYANKFN (170 aa)).

Belongs to the DEAD box helicase family. DEAH subfamily. Monomer.

The protein resides in the virion. The catalysed reaction is ATP + H2O = ADP + phosphate + H(+). Functionally, NTP-dependent helicase that catalyzes unidirectional unwinding of 3'tailed duplex RNAs and plays an important role during transcription of early mRNAs, presumably by preventing R-loop formation behind the elongating RNA polymerase. Might also play a role in the export of newly synthesized mRNA chains out of the core into the cytoplasm. Required for replication and propagation of viral particles. In Bos taurus (Bovine), this protein is RNA helicase NPH-II (OPG084).